We begin with the raw amino-acid sequence, 469 residues long: UDP-N-acetylmuramate--L-alanine ligase (469 aa).

Glycine 113–threonine 119 provides a ligand contact to ATP.

The protein belongs to the MurCDEF family.

The protein resides in the cytoplasm. It catalyses the reaction UDP-N-acetyl-alpha-D-muramate + L-alanine + ATP = UDP-N-acetyl-alpha-D-muramoyl-L-alanine + ADP + phosphate + H(+). Its pathway is cell wall biogenesis; peptidoglycan biosynthesis. Its function is as follows. Cell wall formation. This chain is UDP-N-acetylmuramate--L-alanine ligase, found in Neisseria meningitidis serogroup B (strain ATCC BAA-335 / MC58).